The following is a 160-amino-acid chain: Thy-1 membrane glycoprotein (160 aa).

A signal peptide spans 1-19 (MNPTVSIAVILTVLQAAHC). Glutamine 20 carries the pyrrolidone carboxylic acid modification. Residues 20 to 120 (QMIRDLSACL…YTGNQIKNIT (101 aa)) enclose the Ig-like V-type domain. 2 cysteine pairs are disulfide-bonded: cysteine 28-cysteine 129 and cysteine 38-cysteine 103. N-linked (GlcNAc...) asparagine glycosylation is found at asparagine 42, asparagine 78, and asparagine 118. Cysteine 129 carries the GPI-anchor amidated cysteine lipid modification. Residues 130–160 (VRLSLLIQNTSWLLLLLLSLPLLQAVDFVSL) constitute a propeptide, removed in mature form. N-linked (GlcNAc...) asparagine glycosylation occurs at asparagine 138.

Post-translationally, the N-terminus is blocked. Forebrain, cerebellum and tectum.

Its subcellular location is the cell membrane. May play a role in cell-cell or cell-ligand interactions during synaptogenesis and other events in the brain. This Gallus gallus (Chicken) protein is Thy-1 membrane glycoprotein (THY1).